The sequence spans 508 residues: Histidine ammonia-lyase (508 aa).

The 5-imidazolinone (Ala-Gly) cross-link spans A141–G143. A 2,3-didehydroalanine (Ser) modification is found at S142.

The protein belongs to the PAL/histidase family. Post-translationally, contains an active site 4-methylidene-imidazol-5-one (MIO), which is formed autocatalytically by cyclization and dehydration of residues Ala-Ser-Gly.

It is found in the cytoplasm. The enzyme catalyses L-histidine = trans-urocanate + NH4(+). The protein operates within amino-acid degradation; L-histidine degradation into L-glutamate; N-formimidoyl-L-glutamate from L-histidine: step 1/3. The chain is Histidine ammonia-lyase (hutH) from Bacillus subtilis (strain 168).